We begin with the raw amino-acid sequence, 655 residues long: WD repeat-containing protein 70 (655 aa).

2 disordered regions span residues 1–24 and 43–170; these read MEHS…LAVT and FEQT…PIHR. Basic and acidic residues predominate over residues 45-78; that stretch reads QTRRTAVERSRKTLEAREKEEEMNREKELRKQLE. Residues 99–112 are compositionally biased toward low complexity; sequence RDTSSSDSDHSSGS. Residues 148–165 are compositionally biased toward acidic residues; that stretch reads EEGEDDDDDDLEDEGEED. WD repeat units lie at residues 181-220, 228-269, 282-322, 331-370, 377-416, 422-467, and 470-509; these read HGTK…ASFK, CECH…ECIK, GHTA…KQKS, GKKV…HPKF, APGT…KPLF, PTLF…RVYE, and ITDA…QRGA. A Glycyl lysine isopeptide (Lys-Gly) (interchain with G-Cter in SUMO2) cross-link involves residue K297. K453 is subject to N6-acetyllysine. Residues 541 to 566 are compositionally biased toward basic and acidic residues; that stretch reads REPRQRSTRKQLEKDRLDPLKSHKPE. The interval 541–582 is disordered; that stretch reads REPRQRSTRKQLEKDRLDPLKSHKPEPPVAGPGRGGRVGTHG. Gly residues predominate over residues 572-582; that stretch reads PGRGGRVGTHG. At T580 the chain carries Phosphothreonine. Glycyl lysine isopeptide (Lys-Gly) (interchain with G-Cter in SUMO2) cross-links involve residues K591 and K597. S622 and S639 each carry phosphoserine. A disordered region spans residues 632 to 655; it reads TMFAQVESDDEESKNEPEWKKRKI. A compositionally biased stretch (basic and acidic residues) spans 645–655; it reads KNEPEWKKRKI.

The protein belongs to the WD repeat GAD-1 family.

The sequence is that of WD repeat-containing protein 70 (Wdr70) from Rattus norvegicus (Rat).